The sequence spans 1494 residues: B-cell CLL/lymphoma 9-like protein (1494 aa).

Disordered stretches follow at residues 1-236 (MRIL…PPSQ) and 269-496 (VPRA…DMGQ). Residues 20-37 (GSPPLSPRGHCPPAPAKP) are compositionally biased toward pro residues. A phosphoserine mark is found at Ser-21 and Ser-25. Lys-36 is modified (N6-acetyllysine). 2 stretches are compositionally biased toward polar residues: residues 45–70 (TNHG…TCNL) and 85–96 (NQISPSNSSLKN). Phosphoserine is present on Ser-88. An N6-acetyllysine mark is found at Lys-108 and Lys-110. 2 stretches are compositionally biased toward basic and acidic residues: residues 114–126 (ERSV…EQRE) and 134–153 (SEAK…ERKQ). Residues Ser-116 and Ser-118 each carry the phosphoserine modification. Lys-137 carries the N6-acetyllysine modification. Residues 193–207 (PGQTAQLPLSESSAP) are compositionally biased toward polar residues. Pro residues-rich tracts occupy residues 279–289 (KVPPTPEPLPL) and 299–322 (SQPP…PPEG). Residues 302–530 (PPLPPPPPAP…QEEYYEEKRR (229 aa)) form a necessary for interaction with CTNNB1 region. Over residues 348 to 360 (THPNTPTAATANN) the composition is skewed to low complexity. A compositionally biased stretch (basic and acidic residues) spans 396–418 (LSKEQLEHRERSLQTLRDIERLL). Position 421 is a phosphoserine (Ser-421). Thr-511 is subject to Phosphothreonine. Arg-677 carries the post-translational modification Asymmetric dimethylarginine. Phosphoserine occurs at positions 747, 810, 912, 923, 935, 939, 944, 972, 984, 988, 994, 1001, 1007, and 1014. Disordered stretches follow at residues 905–1082 (RGLG…NPLS) and 1113–1206 (ELLP…PGGP). Polar residues predominate over residues 932–957 (PTLSQVHSPLVTSPSANLKSPQTPSQ). The segment covering 974 to 993 (QVLSSSLGVRSPTGSPSRLK) has biased composition (polar residues). The segment covering 1016-1035 (GVSQNKQPPLSINSSSTLGN) has biased composition (polar residues). Low complexity predominate over residues 1046–1059 (PRNSSSAPPANPSS). Positions 1060–1082 (GLMNPSLPFTSSPDPTPSQNPLS) are enriched in polar residues. The span at 1119 to 1129 (PLLPPPPPPQG) shows a compositional bias: pro residues. A compositionally biased stretch (polar residues) spans 1133 to 1143 (GISNNQPNQMH). A compositionally biased stretch (pro residues) spans 1165 to 1176 (HEPPPTMLPSPT). Lys-1339 participates in a covalent cross-link: Glycyl lysine isopeptide (Lys-Gly) (interchain with G-Cter in SUMO2).

The protein belongs to the BCL9 family. In terms of assembly, found in a complex with CDC73; CTNNB1 and PYGO1. Interacts with CTNNB1. In terms of tissue distribution, expressed in kidney, liver, lung, testis, brain, spleen, heart and skeletal muscle. Highly expressed in numerous colorectal tumors compared to corresponding non-cancerous tissues.

It localises to the nucleus. Transcriptional regulator that acts as an activator. Promotes beta-catenin transcriptional activity. Plays a role in tumorigenesis. Enhances the neoplastic transforming activity of CTNNB1. This is B-cell CLL/lymphoma 9-like protein (Bcl9l) from Mus musculus (Mouse).